The chain runs to 236 residues: uncharacterized protein (236 aa).

Positions 1-12 (MKLLGHRKSHGH) are enriched in basic residues. Residues 1–108 (MKLLGHRKSH…KAANRARMTE (108 aa)) are disordered. A compositionally biased stretch (basic and acidic residues) spans 13 to 31 (QRADASPDAGSKDGCRPDS). Residues 32–47 (GRTSGSDTSRGSQTTG) are compositionally biased toward low complexity. Residues 52 to 65 (PTPKRNQSRRHTKK) are compositionally biased toward basic residues. Residues 67-78 (PVAPAPMTAAQA) show a composition bias toward low complexity. The span at 90 to 108 (LSREERRAEKAANRARMTE) shows a compositional bias: basic and acidic residues. 2 helical membrane passes run 142 to 162 (NLLGLFMPSALTLLFVMFAVP) and 166 to 186 (FYLSPAMLILLALMTIDAIIL).

The protein resides in the cell membrane. This is an uncharacterized protein from Mycobacterium tuberculosis (strain CDC 1551 / Oshkosh).